A 248-amino-acid polypeptide reads, in one-letter code: DNA repair protein RecO (248 aa).

Belongs to the RecO family.

Involved in DNA repair and RecF pathway recombination. This chain is DNA repair protein RecO, found in Chelativorans sp. (strain BNC1).